A 100-amino-acid chain; its full sequence is MQLSPQEKDKLLIFTAALVAERRKARGLKLNYPEAVAYISAAILEGAREGRTVADLMNYGTTLLTRDDVMEGVPEMLTEVQVEATFPDGTKLVTVHTPIR.

Belongs to the urease gamma subunit family. In terms of assembly, heterotrimer of UreA (gamma), UreB (beta) and UreC (alpha) subunits. Three heterotrimers associate to form the active enzyme.

It localises to the cytoplasm. The enzyme catalyses urea + 2 H2O + H(+) = hydrogencarbonate + 2 NH4(+). The protein operates within nitrogen metabolism; urea degradation; CO(2) and NH(3) from urea (urease route): step 1/1. The polypeptide is Urease subunit gamma (Thermosynechococcus vestitus (strain NIES-2133 / IAM M-273 / BP-1)).